The sequence spans 347 residues: N6-Methyl-AMP deaminase-L (347 aa).

Zn(2+)-binding residues include H19 and H21. Residues H21, N23, H69, 101 to 104 (STPR), D142, and G175 each bind N(6)-methyl-AMP. Residue H202 participates in Zn(2+) binding. The N(6)-methyl-AMP site is built by E205, D283, and D284. The active-site Proton donor is E205. Position 283 (D283) interacts with Zn(2+).

This sequence belongs to the metallo-dependent hydrolases superfamily. Adenosine and AMP deaminases family. Monomer. Zn(2+) serves as cofactor.

The catalysed reaction is N(6)-methyl-AMP + H2O + H(+) = IMP + methylamine. Functionally, catalyzes the hydrolysis of the free cytosolic methylated adenosine nucleotide N(6)-methyl-AMP (N6-mAMP) to produce inositol monophosphate (IMP) and methylamine. Is required for the catabolism of cytosolic N6-mAMP, which is derived from the degradation of mRNA containing N6-methylated adenine (m6A). This Xenopus laevis (African clawed frog) protein is N6-Methyl-AMP deaminase-L (mapda.L).